We begin with the raw amino-acid sequence, 954 residues long: Zinc finger protein 618 (954 aa).

M1 is modified (N-acetylmethionine). Positions 1–19 (MNQPGGAAAPQADGASAAG) are enriched in low complexity. Positions 1–56 (MNQPGGAAAPQADGASAAGRKSTASRERLKRSQKSTKVEGPEPVPAEASLSAEQGT) are disordered. Glycyl lysine isopeptide (Lys-Gly) (interchain with G-Cter in SUMO2) cross-links involve residues K63 and K81. C2H2-type zinc fingers lie at residues 147 to 169 (YECGICGKKYKYYNCFQTHVRAH) and 188 to 210 (YTCDICGKKYKYYSCFQEHRDLH). Residue K239 forms a Glycyl lysine isopeptide (Lys-Gly) (interchain with G-Cter in SUMO2) linkage. The segment at 256–278 (YTCEFCGKQYKYYTPYQEHVALH) adopts a C2H2-type 3 zinc-finger fold. Disordered regions lie at residues 282–307 (STAPGWEPPDDPDTGSECSHPEVSPS) and 337–390 (RTPP…NSSE). The span at 340–357 (PATQTQTFRTPNSGSPAS) shows a compositional bias: polar residues. Residues 366-380 (FSRRVEGKAQNHFEE) are compositionally biased toward basic and acidic residues. Residues 392–414 (YTCGACGIQFQFYNNLLEHMQSH) form a C2H2-type 4 zinc finger. Positions 421-463 (NIASNQSRSPPAVVEEKWKPQAQRNSANNTTTSGLTPNSMIPE) are disordered. K437 is covalently cross-linked (Glycyl lysine isopeptide (Lys-Gly) (interchain with G-Cter in SUMO2)). Positions 442–459 (AQRNSANNTTTSGLTPNS) are enriched in polar residues.

This sequence belongs to the krueppel C2H2-type zinc-finger protein family. As to quaternary structure, interacts with UHRF2.

The protein localises to the nucleus. Its subcellular location is the chromosome. Its function is as follows. Regulates UHRF2 function as a specific 5-hydroxymethylcytosine (5hmC) reader by regulating its chromatin localization. The polypeptide is Zinc finger protein 618 (ZNF618) (Homo sapiens (Human)).